We begin with the raw amino-acid sequence, 524 residues long: Bifunctional purine biosynthesis protein PurH (524 aa).

The MGS-like domain maps to 1–154 (MTRLALLSTS…KNHAHVTVLC (154 aa)).

The protein belongs to the PurH family.

It carries out the reaction (6R)-10-formyltetrahydrofolate + 5-amino-1-(5-phospho-beta-D-ribosyl)imidazole-4-carboxamide = 5-formamido-1-(5-phospho-D-ribosyl)imidazole-4-carboxamide + (6S)-5,6,7,8-tetrahydrofolate. The catalysed reaction is IMP + H2O = 5-formamido-1-(5-phospho-D-ribosyl)imidazole-4-carboxamide. It participates in purine metabolism; IMP biosynthesis via de novo pathway; 5-formamido-1-(5-phospho-D-ribosyl)imidazole-4-carboxamide from 5-amino-1-(5-phospho-D-ribosyl)imidazole-4-carboxamide (10-formyl THF route): step 1/1. It functions in the pathway purine metabolism; IMP biosynthesis via de novo pathway; IMP from 5-formamido-1-(5-phospho-D-ribosyl)imidazole-4-carboxamide: step 1/1. In Acaryochloris marina (strain MBIC 11017), this protein is Bifunctional purine biosynthesis protein PurH.